Consider the following 196-residue polypeptide: ATP-dependent Clp protease proteolytic subunit (196 aa).

The Nucleophile role is filled by S101. Residue H126 is part of the active site.

This sequence belongs to the peptidase S14 family. In terms of assembly, component of the chloroplastic Clp protease core complex.

Its subcellular location is the plastid. The protein localises to the chloroplast stroma. It carries out the reaction Hydrolysis of proteins to small peptides in the presence of ATP and magnesium. alpha-casein is the usual test substrate. In the absence of ATP, only oligopeptides shorter than five residues are hydrolyzed (such as succinyl-Leu-Tyr-|-NHMec, and Leu-Tyr-Leu-|-Tyr-Trp, in which cleavage of the -Tyr-|-Leu- and -Tyr-|-Trp bonds also occurs).. Cleaves peptides in various proteins in a process that requires ATP hydrolysis. Has a chymotrypsin-like activity. Plays a major role in the degradation of misfolded proteins. This is ATP-dependent Clp protease proteolytic subunit from Lactuca sativa (Garden lettuce).